Reading from the N-terminus, the 147-residue chain is D-aminoacyl-tRNA deacylase (147 aa).

The Gly-cisPro motif, important for rejection of L-amino acids signature appears at 137-138 (GP).

It belongs to the DTD family. Homodimer.

It localises to the cytoplasm. The catalysed reaction is glycyl-tRNA(Ala) + H2O = tRNA(Ala) + glycine + H(+). It carries out the reaction a D-aminoacyl-tRNA + H2O = a tRNA + a D-alpha-amino acid + H(+). Its function is as follows. An aminoacyl-tRNA editing enzyme that deacylates mischarged D-aminoacyl-tRNAs. Also deacylates mischarged glycyl-tRNA(Ala), protecting cells against glycine mischarging by AlaRS. Acts via tRNA-based rather than protein-based catalysis; rejects L-amino acids rather than detecting D-amino acids in the active site. By recycling D-aminoacyl-tRNA to D-amino acids and free tRNA molecules, this enzyme counteracts the toxicity associated with the formation of D-aminoacyl-tRNA entities in vivo and helps enforce protein L-homochirality. Upon expression in B.subtilis strain 168 confers resistance to D-Tyr and D-Asp, suggesting it acts on both of these amino acids. The sequence is that of D-aminoacyl-tRNA deacylase from Bacillus amyloliquefaciens (Bacillus velezensis).